A 455-amino-acid chain; its full sequence is Probable ATP-dependent RNA helicase DDX47 (455 aa).

A compositionally biased stretch (basic and acidic residues) spans 1–10 (MAAPEEHDSP). The disordered stretch occupies residues 1-20 (MAAPEEHDSPTEASQPIVEE). Ala-2 bears the N-acetylalanine mark. Residue Ser-9 is modified to Phosphoserine. The short motif at 24–52 (KTFKDLGVTDVLCEACDQLGWTKPTKIQI) is the Q motif element. One can recognise a Helicase ATP-binding domain in the interval 55–226 (IPLALQGRDI…RAALKNPVKC (172 aa)). Residue 68 to 75 (AETGSGKT) coordinates ATP. Thr-149 bears the Phosphothreonine mark. The short motif at 174 to 177 (DEAD) is the DEAD box element. The 161-residue stretch at 237–397 (KLQQYYIFIP…GFPTQDDEVM (161 aa)) folds into the Helicase C-terminal domain. The segment covering 413 to 428 (ELREHGEKKKRSREDA) has biased composition (basic and acidic residues). A disordered region spans residues 413–455 (ELREHGEKKKRSREDAGDNDDTEGAIGVRNKVAGGKMKKRKGR). At Ser-424 the chain carries Phosphoserine.

It belongs to the DEAD box helicase family. DDX47/RRP3 subfamily. In terms of assembly, interacts with AGO1 and AGO2. Interacts with GABARAP. Interacts with NOL8; the interaction is RNA-dependent. As to expression, expressed in skin, lung and breast. Also expressed in the brain.

It is found in the nucleus. Its subcellular location is the nucleolus. It catalyses the reaction ATP + H2O = ADP + phosphate + H(+). Functionally, required for efficient ribosome biogenesis. May have a role in mRNA splicing. Involved in apoptosis. The polypeptide is Probable ATP-dependent RNA helicase DDX47 (DDX47) (Homo sapiens (Human)).